Reading from the N-terminus, the 187-residue chain is Casparian strip membrane protein 1 (187 aa).

Residues 1–10 (MKGSSEHGET) are compositionally biased toward basic and acidic residues. Residues 1–20 (MKGSSEHGETSKQAPLGSSR) are disordered. Residues 1–27 (MKGSSEHGETSKQAPLGSSRGVSKGVS) lie on the Cytoplasmic side of the membrane. Residues 28 to 48 (VLDLILRFIAIIGTLASAIAM) traverse the membrane as a helical segment. At 49–75 (GTTNETLPFFTQFIRFKAQYSDLPTLT) the chain is on the extracellular side. An N-linked (GlcNAc...) asparagine glycan is attached at N52. A helical membrane pass occupies residues 76 to 96 (FFVVANSIVCAYLTLSLPLSI). Residues 97–115 (VHIIRSRAKYSRLLLVVLD) lie on the Cytoplasmic side of the membrane. Residues 116-136 (AAMLALVTPGASAAAAIVYLA) traverse the membrane as a helical segment. At 137-162 (HKGNVRANWLAICQQFDSFCERISGC) the chain is on the extracellular side. The chain crosses the membrane as a helical span at residues 163 to 183 (LIGSFGAMVMLVLLLLLSAIA). Residues 184–187 (LARR) are Cytoplasmic-facing.

The protein belongs to the Casparian strip membrane proteins (CASP) family. Homodimer and heterodimers.

It is found in the cell membrane. Regulates membrane-cell wall junctions and localized cell wall deposition. Required for establishment of the Casparian strip membrane domain (CSD) and the subsequent formation of Casparian strips, a cell wall modification of the root endodermis that determines an apoplastic barrier between the intraorganismal apoplasm and the extraorganismal apoplasm and prevents lateral diffusion. This Zea mays (Maize) protein is Casparian strip membrane protein 1.